We begin with the raw amino-acid sequence, 548 residues long: Transcriptional adapter ADA2a (548 aa).

The segment at 1-30 (MGRSKLASRPAEEDLNPGKSKRKKISLGPE) is disordered. The ZZ-type zinc-finger motif lies at 48–104 (PGLYCCNYCDKDLSGLVRFKCAVCMDFDLCVECFSVGVELNRHKNSHPYRVMDNLSF). Cysteine 53, cysteine 56, cysteine 68, cysteine 71, cysteine 77, cysteine 80, histidine 90, and histidine 94 together coordinate Zn(2+). Positions 106-158 (LVTSDWNADEEILLLEAIATYGFGNWKEVADHVGSKTTTECIKHFNSAYMQSP) constitute an SANT domain. Lysine 257 is modified (N6-acetyllysine; by GCN5). Residues 365 to 386 (QSKEEHKELIKKVIEEHQILRR) are a coiled coil. The 88-residue stretch at 461–548 (PRIYSGLDTW…LVHKGIGDST (88 aa)) folds into the SWIRM domain.

Interacts in vitro with the HAT domain of GCN5 and with the DNA-binding domain of the transcriptional activator DREB1B/CBF1. Acetylated in vitro by GCN5, but acetylation is not essential for biological activity. Expressed in roots and leaves.

Its subcellular location is the nucleus. Functionally, required for the function of some acidic activation domains, which activate transcription from a distant site. The exact mechanism of action is not yet known. ADA2 stimulates the acetyltransferase activity of GCN5 on free histones or nucleosomes, probably by opening up the promoter region. This Arabidopsis thaliana (Mouse-ear cress) protein is Transcriptional adapter ADA2a (ADA2A).